We begin with the raw amino-acid sequence, 267 residues long: NAD kinase 2 (267 aa).

Catalysis depends on D52, which acts as the Proton acceptor. Residues 52-53, 124-125, R151, D153, 164-169, and A188 each bind NAD(+); these read DA, NE, and TAYNKS.

This sequence belongs to the NAD kinase family. A divalent metal cation serves as cofactor.

Its subcellular location is the cytoplasm. The catalysed reaction is NAD(+) + ATP = ADP + NADP(+) + H(+). Involved in the regulation of the intracellular balance of NAD and NADP, and is a key enzyme in the biosynthesis of NADP. Catalyzes specifically the phosphorylation on 2'-hydroxyl of the adenosine moiety of NAD to yield NADP. The polypeptide is NAD kinase 2 (Bacillus cereus (strain ATCC 14579 / DSM 31 / CCUG 7414 / JCM 2152 / NBRC 15305 / NCIMB 9373 / NCTC 2599 / NRRL B-3711)).